A 291-amino-acid chain; its full sequence is Protein SpdB (291 aa).

Helical transmembrane passes span 24 to 44 (VVVI…LVVG), 71 to 91 (ITGV…AHAL), and 99 to 119 (WLAV…HGLW).

The protein resides in the cell membrane. Its function is as follows. Involved in plasmid transfer. The chain is Protein SpdB (spdB) from Streptomyces lividans.